The primary structure comprises 909 residues: Epithelial discoidin domain-containing receptor 1 (909 aa).

A signal peptide spans 1–18; sequence MGPEALSSLLLLLLVASG. Residues 21 to 413 are Extracellular-facing; sequence DMKGHFDPAK…VAKAEGSPTA (393 aa). The F5/8 type C domain occupies 31 to 181; sequence CRYALGMQDR…VCLRVELYGC (151 aa). 2 disulfide bridges follow: C31–C181 and C70–C173. The segment covering 45–60 has biased composition (low complexity); that stretch reads SDISASSSWSDSTAAR. The disordered stretch occupies residues 45 to 65; the sequence is SDISASSSWSDSTAARHSSDG. Positions 188–363 are DS-like domain; that stretch reads LSYTAPVGQT…LFSEISFISD (176 aa). Residues N207, Q226, D229, V231, Y249, and Y251 each contribute to the Ca(2+) site. N207 carries N-linked (GlcNAc...) asparagine glycosylation. N-linked (GlcNAc...) asparagine glycosylation occurs at N256. A disulfide bond links C299 and C344. Residues S356 and E357 each coordinate Ca(2+). N366 and N390 each carry an N-linked (GlcNAc...) asparagine glycan. Residues 414–434 form a helical membrane-spanning segment; sequence ILIGCLVAIILLLLLIIALML. The Cytoplasmic portion of the chain corresponds to 435-909; it reads WRLHWRRLLS…FLAEDALNTV (475 aa). The disordered stretch occupies residues 466 to 495; sequence ILINNRPGPREPPPYQEPRPRGNPPHSAPC. Pro residues predominate over residues 475–492; that stretch reads REPPPYQEPRPRGNPPHS. The short motif at 477–480 is the PPxY motif element; sequence PPPY. A phosphotyrosine; by autocatalysis mark is found at Y480, Y509, and Y516. One can recognise a Protein kinase domain in the interval 606-901; that stretch reads LRFKEKLGEG…PPFSQLHRFL (296 aa). 612-620 contacts ATP; that stretch reads LGEGQFGEV. S627 is subject to Phosphoserine. Residue K651 participates in ATP binding. A Phosphotyrosine; by autocatalysis modification is found at Y736. D762 acts as the Proton acceptor in catalysis. Phosphotyrosine; by autocatalysis occurs at positions 788, 792, and 793.

It belongs to the protein kinase superfamily. Tyr protein kinase family. Insulin receptor subfamily. As to quaternary structure, homodimer. Interacts (via PPxY motif) with WWC1 (via WW domains) in a collagen-regulated manner. Forms a tripartite complex with WWC1 and PRKCZ, but predominantly in the absence of collagen. Interacts (tyrosine phosphorylated) with SHC1. Interacts with SRC. Interacts with MYH9. Interacts with CDH1. Interacts with PTPN11. Interacts with NCK2. Autophosphorylated in response to fibrillar collagen binding.

The protein localises to the cell membrane. The enzyme catalyses L-tyrosyl-[protein] + ATP = O-phospho-L-tyrosyl-[protein] + ADP + H(+). Functionally, tyrosine kinase that functions as a cell surface receptor for fibrillar collagen and regulates cell attachment to the extracellular matrix, remodeling of the extracellular matrix, cell migration, differentiation, survival and cell proliferation. Collagen binding triggers a signaling pathway that involves SRC and leads to the activation of MAP kinases. Regulates remodeling of the extracellular matrix by up-regulation of the matrix metalloproteinases MMP2, MMP7 and MMP9, and thereby facilitates cell migration and wound healing. Promotes smooth muscle cell migration, and thereby contributes to arterial wound healing. Also plays a role in tumor cell invasion. Phosphorylates PTPN11. Required for normal blastocyst implantation during pregnancy, for normal mammary gland differentiation and normal lactation. Required for normal ear morphology and normal hearing. The sequence is that of Epithelial discoidin domain-containing receptor 1 (DDR1) from Pan troglodytes (Chimpanzee).